A 235-amino-acid chain; its full sequence is Large ribosomal subunit protein uL1 (235 aa).

The protein belongs to the universal ribosomal protein uL1 family. Part of the 50S ribosomal subunit.

Its function is as follows. Binds directly to 23S rRNA. The L1 stalk is quite mobile in the ribosome, and is involved in E site tRNA release. Functionally, protein L1 is also a translational repressor protein, it controls the translation of the L11 operon by binding to its mRNA. The chain is Large ribosomal subunit protein uL1 from Prochlorococcus marinus (strain MIT 9515).